A 727-amino-acid polypeptide reads, in one-letter code: Non-structural protein 4 (727 aa).

Disordered regions lie at residues 1 to 38 and 671 to 727; these read MNQSRSFVTGRGRDLSRTPSALSSNSETPGSMSSPSEG and GNSM…KLSK. Positions 17–38 are enriched in polar residues; sequence RTPSALSSNSETPGSMSSPSEG. Positions 712–727 are enriched in basic residues; that stretch reads SRRKARKARAASKLSK.

The chain is Non-structural protein 4 from Rice dwarf virus (isolate Fujian) (RDV).